We begin with the raw amino-acid sequence, 507 residues long: Variant surface glycoprotein ILTAT 1.25 (507 aa).

The signal sequence occupies residues 1–21; it reads MQSQQQPVFISIILLAINTDA. Residues 83 to 95 are compositionally biased toward basic and acidic residues; it reads EPEAAPKESRSDE. The tract at residues 83 to 102 is disordered; sequence EPEAAPKESRSDETPEACKA. 2 N-linked (GlcNAc...) asparagine glycosylation sites follow: N141 and N371. The segment covering 384–395 has biased composition (low complexity); the sequence is PTKQPPAKAAAA. The disordered stretch occupies residues 384 to 474; that stretch reads PTKQPPAKAA…KKEEECKSPN (91 aa). Positions 396-420 are enriched in basic and acidic residues; the sequence is PEKKSNPQKDCNKNTKKRDCKEGDG. The segment covering 444–455 has biased composition (low complexity); the sequence is SAAGAGDAGASD. A compositionally biased stretch (basic and acidic residues) spans 456-474; it reads TEAKKCSDKKKEEECKSPN. The GPI-anchor amidated aspartate moiety is linked to residue D484. Positions 485–507 are cleaved as a propeptide — removed in mature form; sequence SSILANKQFALSVASAAFVALLF.

It is found in the cell membrane. Its function is as follows. VSG forms a coat on the surface of the parasite. The trypanosome evades the immune response of the host by expressing a series of antigenically distinct VSGs from an estimated 1000 VSG genes. This is Variant surface glycoprotein ILTAT 1.25 from Trypanosoma brucei brucei.